The chain runs to 266 residues: Exosome complex component Rrp42 (266 aa).

Belongs to the RNase PH family. Rrp42 subfamily. In terms of assembly, component of the archaeal exosome complex. Forms a hexameric ring-like arrangement composed of 3 Rrp41-Rrp42 heterodimers. The hexameric ring associates with a trimer of Rrp4 and/or Csl4 subunits.

Its subcellular location is the cytoplasm. Non-catalytic component of the exosome, which is a complex involved in RNA degradation. Contributes to the structuring of the Rrp41 active site. The protein is Exosome complex component Rrp42 of Methanosarcina acetivorans (strain ATCC 35395 / DSM 2834 / JCM 12185 / C2A).